Consider the following 285-residue polypeptide: 4,4'-diapophytoene synthase (285 aa).

Residues 18-21 (YSKS), Tyr41, and Arg45 contribute to the (2E,6E)-farnesyl diphosphate site. Asp48 and Asp52 together coordinate Mg(2+). Residue Gln163 participates in (2E,6E)-farnesyl diphosphate binding. Residue Asn166 participates in Mg(2+) binding. Arg169 serves as a coordination point for (2E,6E)-farnesyl diphosphate. Asp170 is a Mg(2+) binding site. Position 247 (Tyr247) interacts with (2E,6E)-farnesyl diphosphate.

Belongs to the phytoene/squalene synthase family. CrtM subfamily. Mg(2+) serves as cofactor.

The enzyme catalyses 2 (2E,6E)-farnesyl diphosphate = 15-cis-4,4'-diapophytoene + 2 diphosphate. Its pathway is carotenoid biosynthesis; staphyloxanthin biosynthesis; staphyloxanthin from farnesyl diphosphate: step 1/5. In terms of biological role, involved in the biosynthesis of the yellow-orange carotenoid staphyloxanthin, which plays a role in the virulence via its protective function against oxidative stress. Catalyzes the head-to-head condensation of two molecules of farnesyl diphosphate (FPP) into the colorless C(30) carotenoid 4,4'-diapophytoene (dehydrosqualene). In Staphylococcus haemolyticus (strain JCSC1435), this protein is 4,4'-diapophytoene synthase (crtM).